A 205-amino-acid polypeptide reads, in one-letter code: MREFIFKANKTITSSDINLKDLPGSCGRLDLLCRCVSDAFFLSHDIRRDVVFYAVLYGQPNPPVCIKFVGSELKKVSPDERNIAIFIKKALKKFEELDEEQRKDWNQSTPGIYVRRLGFRNLVLEKLEEGKNIYYLHMNGEDVENVDIENPVFIIGDHIGIGEEDERFLDEIKAKRISLSPLELHANHCITIIHNVLDKKRICEI.

S-adenosyl-L-methionine-binding positions include leucine 136, glycine 156, 179 to 184 (LSPLEL), and cysteine 189.

It belongs to the methyltransferase superfamily. TrmY family. In terms of assembly, homodimer.

The protein localises to the cytoplasm. The enzyme catalyses pseudouridine(54) in tRNA + S-adenosyl-L-methionine = N(1)-methylpseudouridine(54) in tRNA + S-adenosyl-L-homocysteine + H(+). Its function is as follows. Specifically catalyzes the N1-methylation of pseudouridine at position 54 (Psi54) in tRNAs. The chain is tRNA (pseudouridine(54)-N(1))-methyltransferase from Methanocaldococcus jannaschii (strain ATCC 43067 / DSM 2661 / JAL-1 / JCM 10045 / NBRC 100440) (Methanococcus jannaschii).